The primary structure comprises 360 residues: Protein Wnt-2 (360 aa).

Residues 1–25 (MNAPLGGIWLWLPLLLTWLTPEVNS) form the signal peptide. 11 disulfides stabilise this stretch: cysteine 76–cysteine 87, cysteine 127–cysteine 135, cysteine 137–cysteine 157, cysteine 206–cysteine 220, cysteine 208–cysteine 215, cysteine 278–cysteine 309, cysteine 294–cysteine 304, cysteine 308–cysteine 348, cysteine 324–cysteine 339, cysteine 326–cysteine 336, and cysteine 331–cysteine 332. Serine 212 is lipidated: O-palmitoleoyl serine; by PORCN. The N-linked (GlcNAc...) asparagine glycan is linked to asparagine 295.

Belongs to the Wnt family. Post-translationally, palmitoleoylation is required for efficient binding to frizzled receptors. Depalmitoleoylation leads to Wnt signaling pathway inhibition.

Its subcellular location is the secreted. It is found in the extracellular space. The protein localises to the extracellular matrix. Its function is as follows. Ligand for members of the frizzled family of seven transmembrane receptors. Functions in the canonical Wnt signaling pathway that results in activation of transcription factors of the TCF/LEF family. Functions as a upstream regulator of FGF10 expression. Plays an important role in embryonic lung development. May contribute to embryonic brain development by regulating the proliferation of dopaminergic precursors and neurons. The polypeptide is Protein Wnt-2 (WNT2) (Nomascus leucogenys (Northern white-cheeked gibbon)).